The sequence spans 343 residues: Probable long-chain-alcohol O-fatty-acyltransferase 2 (343 aa).

The next 8 helical transmembrane spans lie at 7-27, 36-56, 58-78, 117-137, 148-168, 235-255, 260-280, and 292-312; these read NLIKVWISALISISYCYYISS, LLSLLPIFIIFLLLPLFFSSV, FCVISGFFFTWLANFKLFLFA, PMSKWVLAFKLLIFSFLLHVY, FAFLALFTIHVYLEAELILVF, GMLATFIVSGLMHELIYFYVI, TWEVTCFFLLHGVVTCLEIAM, and AVSGLAITVFLLVTAGWLFYP.

It belongs to the wax synthase family.

Its subcellular location is the membrane. The enzyme catalyses a long chain fatty alcohol + a fatty acyl-CoA = a wax ester + CoA. Catalyzes the final step in the synthesis of long-chain linear esters (waxes). The polypeptide is Probable long-chain-alcohol O-fatty-acyltransferase 2 (AT2) (Arabidopsis thaliana (Mouse-ear cress)).